A 435-amino-acid polypeptide reads, in one-letter code: MTEQPINTKKKNGDISKAPTPQNTPASVTNSYMRSKPPTVSTIQESNNEDGTGAAAAAGGLANNPVLLSMIQGKLGDLVGKQSGYIDNLSKPVKNRVYGLKSLQLNQMKLEAQFQKELLELEKKFFAKYQPLYVKRKQIINGELEPTVEEIEEGQQLEEEEKGIDKEDGEEEEEEEEDDEEEDEQGIPGFWLTALENLSTVSETITDRDSEVLSNLIDIRMEYLSTPGFQLIFEFKPNDFFENQTLTKTYHYQAELGYSGDFVYDHADGCEIRWKSKENNVTITIERRKQRNKTTKQTRTIEKLTPTESFFNFFDPPKPPKIKSEDDDNDDKLQDKEEANDDDEGEEGDEEDEELEARLELDYQLGEEIKDRLIPRAIDWFTGDAVDFDYPELEGEGDEDEYSDEDGEGDSDDDDDDDDEAAGSQKQPPPECKQQ.

The tract at residues 1-51 (MTEQPINTKKKNGDISKAPTPQNTPASVTNSYMRSKPPTVSTIQESNNEDG) is disordered. Ser16 bears the Phosphoserine mark. Over residues 19-50 (PTPQNTPASVTNSYMRSKPPTVSTIQESNNED) the composition is skewed to polar residues. 2 positions are modified to phosphothreonine: Thr20 and Thr24. Phosphoserine is present on Ser27. Thr29 is subject to Phosphothreonine. 2 positions are modified to phosphoserine: Ser31 and Ser35. Thr42 carries the post-translational modification Phosphothreonine. At Ser46 the chain carries Phosphoserine. At Thr52 the chain carries Phosphothreonine. 2 stretches are compositionally biased toward acidic residues: residues 146–185 (PTVEEIEEGQQLEEEEKGIDKEDGEEEEEEEEDDEEEDEQ) and 338–355 (EANDDDEGEEGDEEDEEL). Disordered regions lie at residues 146 to 187 (PTVE…EQGI) and 308 to 435 (ESFF…CKQQ). Positions 356–374 (EARLELDYQLGEEIKDRLI) are enriched in basic and acidic residues. Positions 386–421 (VDFDYPELEGEGDEDEYSDEDGEGDSDDDDDDDDEA) are enriched in acidic residues.

The protein belongs to the nucleosome assembly protein (NAP) family. As to quaternary structure, component of the GIN4 complex which forms a ring at the bud neck. In terms of processing, phosphorylation is cell cycle dependent and is important for its bud neck localization. Phosphorylation is highest in newly collected G1 cells, declines when the cells are traversing through the G1 phase, and reaches the lowest level around the time of bud emergence. Phosphorylation increases and remains high through the rest of the cell cycle until the beginning of the next one, when it decreases again. Phosphorylation involves two septin ring-associated kinases, CLA4 and GIN4, and its dephosphorylation occurs at the septin ring in a manner dependent on the phosphatases PP2A and CDC14.

It is found in the bud neck. It localises to the bud tip. In terms of biological role, acidic protein, which assembles histones into an octamer. Involved in the regulation of the localization and the function of the septins during mitosis. This chain is Nucleosome assembly protein 1 (NAP1), found in Candida albicans (strain SC5314 / ATCC MYA-2876) (Yeast).